Reading from the N-terminus, the 299-residue chain is ATP phosphoribosyltransferase (299 aa).

The protein belongs to the ATP phosphoribosyltransferase family. Long subfamily. In terms of assembly, equilibrium between an active dimeric form, an inactive hexameric form and higher aggregates. Interconversion between the various forms is largely reversible and is influenced by the natural substrates and inhibitors of the enzyme. The cofactor is Mg(2+).

The protein localises to the cytoplasm. The catalysed reaction is 1-(5-phospho-beta-D-ribosyl)-ATP + diphosphate = 5-phospho-alpha-D-ribose 1-diphosphate + ATP. It functions in the pathway amino-acid biosynthesis; L-histidine biosynthesis; L-histidine from 5-phospho-alpha-D-ribose 1-diphosphate: step 1/9. Its activity is regulated as follows. Feedback inhibited by histidine. Catalyzes the condensation of ATP and 5-phosphoribose 1-diphosphate to form N'-(5'-phosphoribosyl)-ATP (PR-ATP). Has a crucial role in the pathway because the rate of histidine biosynthesis seems to be controlled primarily by regulation of HisG enzymatic activity. In Escherichia fergusonii (strain ATCC 35469 / DSM 13698 / CCUG 18766 / IAM 14443 / JCM 21226 / LMG 7866 / NBRC 102419 / NCTC 12128 / CDC 0568-73), this protein is ATP phosphoribosyltransferase.